The primary structure comprises 203 residues: Large ribosomal subunit protein uL3 (203 aa).

The protein belongs to the universal ribosomal protein uL3 family. In terms of assembly, part of the 50S ribosomal subunit. Forms a cluster with proteins L14 and L19.

Functionally, one of the primary rRNA binding proteins, it binds directly near the 3'-end of the 23S rRNA, where it nucleates assembly of the 50S subunit. The polypeptide is Large ribosomal subunit protein uL3 (Christiangramia forsetii (strain DSM 17595 / CGMCC 1.15422 / KT0803) (Gramella forsetii)).